A 127-amino-acid chain; its full sequence is Large ribosomal subunit protein bL17 (127 aa).

Belongs to the bacterial ribosomal protein bL17 family. As to quaternary structure, part of the 50S ribosomal subunit. Contacts protein L32.

This Pelobacter propionicus (strain DSM 2379 / NBRC 103807 / OttBd1) protein is Large ribosomal subunit protein bL17.